A 210-amino-acid polypeptide reads, in one-letter code: Ribosomal RNA small subunit methyltransferase G (210 aa).

Residues Gly-76, Leu-81, 127–128 (VE), and Arg-142 each bind S-adenosyl-L-methionine.

This sequence belongs to the methyltransferase superfamily. RNA methyltransferase RsmG family.

The protein localises to the cytoplasm. It carries out the reaction guanosine(527) in 16S rRNA + S-adenosyl-L-methionine = N(7)-methylguanosine(527) in 16S rRNA + S-adenosyl-L-homocysteine. Its function is as follows. Specifically methylates the N7 position of guanine in position 527 of 16S rRNA. This chain is Ribosomal RNA small subunit methyltransferase G, found in Vibrio cholerae serotype O1 (strain ATCC 39315 / El Tor Inaba N16961).